The sequence spans 241 residues: Demethylmenaquinone methyltransferase (241 aa).

S-adenosyl-L-methionine contacts are provided by residues Thr-60, Asp-81, and 106–107 (DA).

Belongs to the class I-like SAM-binding methyltransferase superfamily. MenG/UbiE family.

It catalyses the reaction a 2-demethylmenaquinol + S-adenosyl-L-methionine = a menaquinol + S-adenosyl-L-homocysteine + H(+). The protein operates within quinol/quinone metabolism; menaquinone biosynthesis; menaquinol from 1,4-dihydroxy-2-naphthoate: step 2/2. Methyltransferase required for the conversion of demethylmenaquinol (DMKH2) to menaquinol (MKH2). The polypeptide is Demethylmenaquinone methyltransferase (Staphylococcus epidermidis (strain ATCC 35984 / DSM 28319 / BCRC 17069 / CCUG 31568 / BM 3577 / RP62A)).